We begin with the raw amino-acid sequence, 430 residues long: MTEIAAIHAREILDSRGNPTVEADVLLADGTLGRAAVPSGASTGEHEAVELRDGDKSHYLGKGVLKAVDNIESVIAPELEGMDAANQRLLDATMIALDGTPNKGRLGANAILAVSMAAARASANSLKIPLYRYLGGANASILPTPMMNILNGGAHADNNVDFQEFMVMPVGAERFSEALRWGAEIFHTLKGVLKKKGYNTAVGDEGGFAPSLSSNTEAIEVILEAIELAGYKAGEDVAIALDPAASEFYDKEKGKYIFKKSDKSEKTSEEMAQYWESWTRQYPIISIEDGFAEDDWQGWRYFTELVGSRIQLVGDDLFVTNTERLQRGIEEGIANSILIKVNQIGTVSETFEAIELGRRYGYTSIISHRSGETEDTFIADLAVATGAGQIKTGSASRTDRIAKYNQLLRIEEQLGQTGEFLGLEAVNFGE.

Q163 is a (2R)-2-phosphoglycerate binding site. E205 functions as the Proton donor in the catalytic mechanism. Positions 242, 288, and 315 each coordinate Mg(2+). Residues K340, R369, S370, and K391 each coordinate (2R)-2-phosphoglycerate. Residue K340 is the Proton acceptor of the active site.

This sequence belongs to the enolase family. Mg(2+) is required as a cofactor.

The protein resides in the cytoplasm. It is found in the secreted. The protein localises to the cell surface. It catalyses the reaction (2R)-2-phosphoglycerate = phosphoenolpyruvate + H2O. The protein operates within carbohydrate degradation; glycolysis; pyruvate from D-glyceraldehyde 3-phosphate: step 4/5. Functionally, catalyzes the reversible conversion of 2-phosphoglycerate (2-PG) into phosphoenolpyruvate (PEP). It is essential for the degradation of carbohydrates via glycolysis. The chain is Enolase from Acidobacterium capsulatum (strain ATCC 51196 / DSM 11244 / BCRC 80197 / JCM 7670 / NBRC 15755 / NCIMB 13165 / 161).